The sequence spans 185 residues: MQNRTGLVLCALSLLTGFLMICLGGFFISSSSSHSHRNLVVAYVLLPLGFVILLSGIFWGTYRQANDNKEMFNHVLRQHLAFQDLPLATVDRPDFYPPAYEESLDVEKQACSAGRGLLGFPPPLYTETSLEPQDKDKNDPQPEAPPPYPENIAVAAATVKTQDAEEPSTVLKAGAVLQLSELASC.

A run of 2 helical transmembrane segments spans residues 8 to 28 (VLCA…GFFI) and 39 to 59 (LVVA…GIFW). A disordered region spans residues 125 to 149 (YTETSLEPQDKDKNDPQPEAPPPYP).

It is found in the membrane. The polypeptide is Transmembrane protein 252 (Tmem252) (Rattus norvegicus (Rat)).